The chain runs to 389 residues: Probable tRNA sulfurtransferase (389 aa).

Residues 57-165 (DEALDRLSKI…EDETYIYHRV (109 aa)) form the THUMP domain. Residues 183-184 (LL), K267, G289, and Q298 each bind ATP.

The protein belongs to the ThiI family.

Its subcellular location is the cytoplasm. It carries out the reaction [ThiI sulfur-carrier protein]-S-sulfanyl-L-cysteine + a uridine in tRNA + 2 reduced [2Fe-2S]-[ferredoxin] + ATP + H(+) = [ThiI sulfur-carrier protein]-L-cysteine + a 4-thiouridine in tRNA + 2 oxidized [2Fe-2S]-[ferredoxin] + AMP + diphosphate. It catalyses the reaction [ThiS sulfur-carrier protein]-C-terminal Gly-Gly-AMP + S-sulfanyl-L-cysteinyl-[cysteine desulfurase] + AH2 = [ThiS sulfur-carrier protein]-C-terminal-Gly-aminoethanethioate + L-cysteinyl-[cysteine desulfurase] + A + AMP + 2 H(+). Its pathway is cofactor biosynthesis; thiamine diphosphate biosynthesis. Its function is as follows. Catalyzes the ATP-dependent transfer of a sulfur to tRNA to produce 4-thiouridine in position 8 of tRNAs, which functions as a near-UV photosensor. Also catalyzes the transfer of sulfur to the sulfur carrier protein ThiS, forming ThiS-thiocarboxylate. This is a step in the synthesis of thiazole, in the thiamine biosynthesis pathway. The sulfur is donated as persulfide by IscS. The polypeptide is Probable tRNA sulfurtransferase (Methanothermobacter thermautotrophicus (strain ATCC 29096 / DSM 1053 / JCM 10044 / NBRC 100330 / Delta H) (Methanobacterium thermoautotrophicum)).